Reading from the N-terminus, the 345-residue chain is MYEHPFQLKSLNTFSVNAFAKSVVTAHHEHTLLKFWRKAYRKGKPVLILGGGSNILFLENYSGTILLNRIKGIFITENETAWQLHVGAGEKWDELVVHTIKKNIPGLENLACIPGYVGAAPIQNIGAYGVELSQICEYVDAIDLYSGKKIRFTCSECDFKYRDSIFRNCLEKYAIVSVGLRLCKKWKPILDYHELAHLEKFHITPRQIFNFIYIIRHKKLPDPVLVGNAGSFFKNPIIDIKTARCLFQIYPNMPYFYQKDGRIKLSAGWLIEYCQLKGYIFGEAAIYPKQALVLINSKKIATGTEIAALALYIYNKVADQFNIYLQPEVRLIGNYGEINPKKLFM.

The region spanning 16-185 is the FAD-binding PCMH-type domain; sequence VNAFAKSVVT…VSVGLRLCKK (170 aa). Arg162 is an active-site residue. The active-site Proton donor is the Ser231. Glu328 is an active-site residue.

Belongs to the MurB family. It depends on FAD as a cofactor.

The protein resides in the cytoplasm. The enzyme catalyses UDP-N-acetyl-alpha-D-muramate + NADP(+) = UDP-N-acetyl-3-O-(1-carboxyvinyl)-alpha-D-glucosamine + NADPH + H(+). The protein operates within cell wall biogenesis; peptidoglycan biosynthesis. In terms of biological role, cell wall formation. The polypeptide is UDP-N-acetylenolpyruvoylglucosamine reductase (Blochmanniella pennsylvanica (strain BPEN)).